A 104-amino-acid chain; its full sequence is Flagellar hook-basal body complex protein FliE (104 aa).

This sequence belongs to the FliE family.

Its subcellular location is the bacterial flagellum basal body. In Serratia proteamaculans (strain 568), this protein is Flagellar hook-basal body complex protein FliE.